A 211-amino-acid polypeptide reads, in one-letter code: Endo-1,4-beta-xylanase 6 (211 aa).

The signal sequence occupies residues 1–16 (MKVTAAFAGLLVTALA). One can recognise a GH11 domain in the interval 19–210 (APEPVLVSRS…GAGSASVTIS (192 aa)). Glu-106 acts as the Nucleophile in catalysis. The active-site Proton donor is Glu-197.

The protein belongs to the glycosyl hydrolase 11 (cellulase G) family.

Its subcellular location is the secreted. The catalysed reaction is Endohydrolysis of (1-&gt;4)-beta-D-xylosidic linkages in xylans.. It functions in the pathway glycan degradation; xylan degradation. Endo-1,4-beta-xylanase involved in the hydrolysis of xylan, a major structural heterogeneous polysaccharide found in plant biomass representing the second most abundant polysaccharide in the biosphere, after cellulose. The sequence is that of Endo-1,4-beta-xylanase 6 (XYN6) from Aspergillus niger.